Here is a 90-residue protein sequence, read N- to C-terminus: uncharacterized protein (90 aa).

This is an uncharacterized protein from Rickettsia prowazekii (strain Madrid E).